The sequence spans 337 residues: 5-formaminoimidazole-4-carboxamide-1-(beta)-D-ribofuranosyl 5'-monophosphate synthetase (337 aa).

His14 and Ser74 together coordinate 5-amino-1-(5-phospho-beta-D-ribosyl)imidazole-4-carboxamide. The region spanning 81 to 328 is the ATP-grasp domain; sequence VELVERMKVP…IAREIRLAIE (248 aa). Residues 125-185 and Glu207 each bind ATP; that span reads PDDI…VPVY. Asn235 contributes to the 5-amino-1-(5-phospho-beta-D-ribosyl)imidazole-4-carboxamide binding site. Mg(2+)-binding residues include Glu273 and Glu286.

This sequence belongs to the phosphohexose mutase family. The cofactor is Mg(2+). It depends on Mn(2+) as a cofactor.

The enzyme catalyses 5-amino-1-(5-phospho-beta-D-ribosyl)imidazole-4-carboxamide + formate + ATP = 5-formamido-1-(5-phospho-D-ribosyl)imidazole-4-carboxamide + ADP + phosphate. The protein operates within purine metabolism; IMP biosynthesis via de novo pathway; 5-formamido-1-(5-phospho-D-ribosyl)imidazole-4-carboxamide from 5-amino-1-(5-phospho-D-ribosyl)imidazole-4-carboxamide (formate route): step 1/1. Functionally, catalyzes the ATP- and formate-dependent formylation of 5-aminoimidazole-4-carboxamide-1-beta-d-ribofuranosyl 5'-monophosphate (AICAR) to 5-formaminoimidazole-4-carboxamide-1-beta-d-ribofuranosyl 5'-monophosphate (FAICAR) in the absence of folates. The sequence is that of 5-formaminoimidazole-4-carboxamide-1-(beta)-D-ribofuranosyl 5'-monophosphate synthetase from Pyrococcus abyssi (strain GE5 / Orsay).